A 163-amino-acid polypeptide reads, in one-letter code: RxLR effector protein PITG_13625 (163 aa).

The N-terminal stretch at M1 to G23 is a signal peptide. Positions R37–E52 match the RxLR-dEER motif.

The protein belongs to the RxLR effector family.

It localises to the secreted. Its subcellular location is the host cell membrane. Effector that enhances P.infestans colonization of Nicotiana benthamiana leaves. The polypeptide is RxLR effector protein PITG_13625 (Phytophthora infestans (strain T30-4) (Potato late blight agent)).